Consider the following 232-residue polypeptide: 5'-methylthioadenosine/S-adenosylhomocysteine nucleosidase (232 aa).

E12 (proton acceptor) is an active-site residue. Substrate is bound by residues G78, I152, and 173 to 174; that span reads ME. D197 acts as the Proton donor in catalysis.

Belongs to the PNP/UDP phosphorylase family. MtnN subfamily. Homodimer.

It carries out the reaction S-adenosyl-L-homocysteine + H2O = S-(5-deoxy-D-ribos-5-yl)-L-homocysteine + adenine. The enzyme catalyses S-methyl-5'-thioadenosine + H2O = 5-(methylsulfanyl)-D-ribose + adenine. The catalysed reaction is 5'-deoxyadenosine + H2O = 5-deoxy-D-ribose + adenine. The protein operates within amino-acid biosynthesis; L-methionine biosynthesis via salvage pathway; S-methyl-5-thio-alpha-D-ribose 1-phosphate from S-methyl-5'-thioadenosine (hydrolase route): step 1/2. Its function is as follows. Catalyzes the irreversible cleavage of the glycosidic bond in both 5'-methylthioadenosine (MTA) and S-adenosylhomocysteine (SAH/AdoHcy) to adenine and the corresponding thioribose, 5'-methylthioribose and S-ribosylhomocysteine, respectively. Also cleaves 5'-deoxyadenosine, a toxic by-product of radical S-adenosylmethionine (SAM) enzymes, into 5-deoxyribose and adenine. Thus, is required for in vivo function of the radical SAM enzymes biotin synthase and lipoic acid synthase, that are inhibited by 5'-deoxyadenosine accumulation. This Enterobacter sp. (strain 638) protein is 5'-methylthioadenosine/S-adenosylhomocysteine nucleosidase.